We begin with the raw amino-acid sequence, 172 residues long: 6,7-dimethyl-8-ribityllumazine synthase (172 aa).

5-amino-6-(D-ribitylamino)uracil contacts are provided by residues F24, 58–60 (ALE), and 82–84 (AVI). 87–88 (ET) is a binding site for (2S)-2-hydroxy-3-oxobutyl phosphate. Residue H90 is the Proton donor of the active site. N115 is a 5-amino-6-(D-ribitylamino)uracil binding site. R129 is a (2S)-2-hydroxy-3-oxobutyl phosphate binding site. Residues 150–172 (ALEQLDGDEDDEGEGEDDEEERA) are disordered. Over residues 154 to 172 (LDGDEDDEGEGEDDEEERA) the composition is skewed to acidic residues.

This sequence belongs to the DMRL synthase family.

The catalysed reaction is (2S)-2-hydroxy-3-oxobutyl phosphate + 5-amino-6-(D-ribitylamino)uracil = 6,7-dimethyl-8-(1-D-ribityl)lumazine + phosphate + 2 H2O + H(+). Its pathway is cofactor biosynthesis; riboflavin biosynthesis; riboflavin from 2-hydroxy-3-oxobutyl phosphate and 5-amino-6-(D-ribitylamino)uracil: step 1/2. Functionally, catalyzes the formation of 6,7-dimethyl-8-ribityllumazine by condensation of 5-amino-6-(D-ribitylamino)uracil with 3,4-dihydroxy-2-butanone 4-phosphate. This is the penultimate step in the biosynthesis of riboflavin. In Paraburkholderia phymatum (strain DSM 17167 / CIP 108236 / LMG 21445 / STM815) (Burkholderia phymatum), this protein is 6,7-dimethyl-8-ribityllumazine synthase.